A 416-amino-acid polypeptide reads, in one-letter code: Esterase FrsA (416 aa).

The disordered stretch occupies residues 19–39; the sequence is ETSTLVRRTRHDQETQGLHST.

The protein belongs to the FrsA family.

It carries out the reaction a carboxylic ester + H2O = an alcohol + a carboxylate + H(+). Its function is as follows. Catalyzes the hydrolysis of esters. This Pectobacterium atrosepticum (strain SCRI 1043 / ATCC BAA-672) (Erwinia carotovora subsp. atroseptica) protein is Esterase FrsA.